Here is a 914-residue protein sequence, read N- to C-terminus: Thyroid peroxidase (914 aa).

The signal sequence occupies residues 1-31; the sequence is MRTLGAMAIMLVVMGTVIFLSFILRSRDILC. The Extracellular portion of the chain corresponds to 32 to 834; sequence GKTMKSHVIS…TCIDSGRLPR (803 aa). Asn123 carries N-linked (GlcNAc...) asparagine glycosylation. Cys136 and Cys152 are oxidised to a cystine. Heme b is bound at residue Asp232. His233 acts as the Proton acceptor in catalysis. Asp234 lines the Ca(2+) pocket. Intrachain disulfides connect Cys253/Cys263 and Cys257/Cys278. Residues Asn271 and Asn299 are each glycosylated (N-linked (GlcNAc...) asparagine). The Ca(2+) site is built by Thr313, Phe315, Asp317, and Ser319. A glycan (N-linked (GlcNAc...) asparagine) is linked at Asn334. Heme b-binding residues include Glu387 and His482. Intrachain disulfides connect Cys586-Cys643, Cys684-Cys709, Cys730-Cys770, Cys756-Cys782, Cys788-Cys802, Cys796-Cys811, and Cys813-Cys826. N-linked (GlcNAc...) asparagine glycosylation is present at Asn603. The Sushi domain occupies 728–783; it reads DKCVFPEEVDNGNFVHCEESGKLVLVYSCFHGYKLQGQEQVTCTQKGWDSEPPVCK. Residues 784-827 form the EGF-like; calcium-binding domain; the sequence is DVNECADLTHPPCHPSAQCKNTKGSFQCVCTDPYVLGEDEKTCI. The chain crosses the membrane as a helical span at residues 835–859; it reads ASWVSIALGALLIGGLASLTWIVIC. The Cytoplasmic portion of the chain corresponds to 860 to 914; the sequence is RWTHADKKATLPITERVTTQSGCRKSQGRGISPHKAAAQDTGQEPASGSRVLLCE. Residues 881–909 are disordered; it reads GCRKSQGRGISPHKAAAQDTGQEPASGSR.

It belongs to the peroxidase family. XPO subfamily. As to quaternary structure, interacts with DUOX1, DUOX2 and CYBA. Requires Ca(2+) as cofactor. The cofactor is heme b. In terms of processing, heme is covalently bound through a H(2)O(2)-dependent autocatalytic process. Heme insertion is important for the delivery of protein at the cell surface. Post-translationally, cleaved in its N-terminal part.

The protein resides in the membrane. The catalysed reaction is 2 iodide + H2O2 + 2 H(+) = diiodine + 2 H2O. It catalyses the reaction [thyroglobulin]-L-tyrosine + iodide + H2O2 + H(+) = [thyroglobulin]-3-iodo-L-tyrosine + 2 H2O. The enzyme catalyses [thyroglobulin]-3-iodo-L-tyrosine + iodide + H2O2 + H(+) = [thyroglobulin]-3,5-diiodo-L-tyrosine + 2 H2O. It carries out the reaction 2 [thyroglobulin]-3,5-diiodo-L-tyrosine + H2O2 = [thyroglobulin]-L-thyroxine + [thyroglobulin]-dehydroalanine + 2 H2O. The catalysed reaction is [thyroglobulin]-3-iodo-L-tyrosine + [thyroglobulin]-3,5-diiodo-L-tyrosine + H2O2 = [thyroglobulin]-3,3',5-triiodo-L-thyronine + [thyroglobulin]-dehydroalanine + 2 H2O. Its pathway is hormone biosynthesis; thyroid hormone biosynthesis. In terms of biological role, iodination and coupling of the hormonogenic tyrosines in thyroglobulin to yield the thyroid hormones T(3) and T(4). The chain is Thyroid peroxidase (Tpo) from Mus musculus (Mouse).